The following is a 96-amino-acid chain: Large ribosomal subunit protein bL28 (96 aa).

The disordered stretch occupies residues methionine 1–alanine 21.

Belongs to the bacterial ribosomal protein bL28 family.

The sequence is that of Large ribosomal subunit protein bL28 from Jannaschia sp. (strain CCS1).